The sequence spans 1460 residues: Centrosomal protein of 164 kDa (1460 aa).

An interaction with ATRIP region spans residues 1 to 194 (MAGRPLRIGD…PSQGLKTSAY (194 aa)). The region spanning 56-89 (APLPGEWKPCQDITGDIYYFNFANGQSMWDHPCD) is the WW domain. The disordered stretch occupies residues 107-135 (GAIKKKKKKKEKKDKKDRDPPKSSLALGS). Residues 109–119 (IKKKKKKKEKK) show a composition bias toward basic residues. At Ser-186 the chain carries Phosphoserine; by ATR and ATM. A Phosphoserine modification is found at Ser-201. Disordered stretches follow at residues 213 to 412 (GLGE…HGLD), 440 to 593 (AQQP…AALK), and 658 to 719 (EEAR…QKNR). Positions 217-227 (ETNEEDEEESD) are enriched in acidic residues. A compositionally biased stretch (basic and acidic residues) spans 256–270 (ESLRTSQPEEKKDVS). Residues 285-296 (SSPGADSSLSSA) are compositionally biased toward low complexity. Composition is skewed to basic and acidic residues over residues 310–323 (LPEKEENEKSEPKI) and 357–367 (EGSRREEAAKE). The segment covering 453-464 (QSSQDELQSKQS) has biased composition (low complexity). Over residues 465-481 (KGLEERLSPPLPHEERA) the composition is skewed to basic and acidic residues. Over residues 514-525 (SAASLSLQLSLQ) the composition is skewed to low complexity. Residues 537–546 (EKGKEQHSQA) are compositionally biased toward basic and acidic residues. A Phosphoserine modification is found at Ser-566. 2 stretches are compositionally biased toward basic and acidic residues: residues 658 to 668 (EEARMREEESQ) and 686 to 719 (DQIRAEQEASLQKLREELESQQKAERASLEQKNR). Residues 1154 to 1206 (GIKALEDMRKNLEKETRHLDEMKSAMRKGHNLLKKKEEKLNQLESSLWEEASD) are a coiled coil. The disordered stretch occupies residues 1290-1310 (PPPLLASMPAQLPPRDPKSTP). Ser-1386, Ser-1388, and Ser-1443 each carry phosphoserine.

Interacts (via N-terminus) with ATRIP. Interacts with ATM, ATR and MDC1. Interacts with XPA (via N-terminus) upon UV irradiation. Interacts with CEP83, CCDC92, TTBK2, DVL3, NPHP3 and weakly with NPHP4. Interacts with DZIP1. Phosphorylation at Ser-186 is induced upon DNA-damage caused by treatment with IR irradiation, UV irradiation, hydroxyurea or amphidicolin. Also MDC1-mediated chromatin remodeling is critical for DNA damage-induced phosphorylation. As to expression, expressed in several cell lines.

Its subcellular location is the cytoplasm. It is found in the cytoskeleton. It localises to the microtubule organizing center. The protein resides in the centrosome. The protein localises to the centriole. Its subcellular location is the nucleus. Plays a role in microtubule organization and/or maintenance for the formation of primary cilia (PC), a microtubule-based structure that protrudes from the surface of epithelial cells. Plays a critical role in G2/M checkpoint and nuclear divisions. A key player in the DNA damage-activated ATR/ATM signaling cascade since it is required for the proper phosphorylation of H2AX, RPA, CHEK2 and CHEK1. Plays a critical role in chromosome segregation, acting as a mediator required for the maintenance of genomic stability through modulation of MDC1, RPA and CHEK1. This chain is Centrosomal protein of 164 kDa (CEP164), found in Homo sapiens (Human).